The primary structure comprises 556 residues: Potassium-transporting ATPase potassium-binding subunit (556 aa).

The next 10 membrane-spanning stretches (helical) occupy residues 6 to 26 (AGIL…VPLG), 65 to 85 (SVLA…LLQG), 133 to 153 (GLSV…MAFV), 176 to 196 (LRIL…GGVI), 249 to 269 (PTTW…FSLP), 283 to 303 (AAIL…MMLF), 378 to 398 (GLYS…LMVG), 419 to 439 (YFLV…ALPG), 483 to 503 (ALGL…LALA), and 526 to 546 (FVGM…LPVL).

Belongs to the KdpA family. As to quaternary structure, the system is composed of three essential subunits: KdpA, KdpB and KdpC.

Its subcellular location is the cell membrane. Part of the high-affinity ATP-driven potassium transport (or Kdp) system, which catalyzes the hydrolysis of ATP coupled with the electrogenic transport of potassium into the cytoplasm. This subunit binds the extracellular potassium ions and delivers the ions to the membrane domain of KdpB through an intramembrane tunnel. The protein is Potassium-transporting ATPase potassium-binding subunit of Mycobacterium sp. (strain KMS).